The primary structure comprises 194 residues: Imidazoleglycerol-phosphate dehydratase (194 aa).

The protein belongs to the imidazoleglycerol-phosphate dehydratase family.

It is found in the cytoplasm. It catalyses the reaction D-erythro-1-(imidazol-4-yl)glycerol 3-phosphate = 3-(imidazol-4-yl)-2-oxopropyl phosphate + H2O. The protein operates within amino-acid biosynthesis; L-histidine biosynthesis; L-histidine from 5-phospho-alpha-D-ribose 1-diphosphate: step 6/9. The sequence is that of Imidazoleglycerol-phosphate dehydratase from Oceanobacillus iheyensis (strain DSM 14371 / CIP 107618 / JCM 11309 / KCTC 3954 / HTE831).